Here is a 105-residue protein sequence, read N- to C-terminus: Small ribosomal subunit protein uS10 (105 aa).

It belongs to the universal ribosomal protein uS10 family. As to quaternary structure, part of the 30S ribosomal subunit.

Functionally, involved in the binding of tRNA to the ribosomes. The polypeptide is Small ribosomal subunit protein uS10 (Cyanothece sp. (strain PCC 7425 / ATCC 29141)).